The following is a 239-amino-acid chain: 1-(5-phosphoribosyl)-5-[(5-phosphoribosylamino)methylideneamino] imidazole-4-carboxamide isomerase (239 aa).

Asp9 serves as the catalytic Proton acceptor. The active-site Proton donor is Asp131.

This sequence belongs to the HisA/HisF family.

Its subcellular location is the cytoplasm. It catalyses the reaction 1-(5-phospho-beta-D-ribosyl)-5-[(5-phospho-beta-D-ribosylamino)methylideneamino]imidazole-4-carboxamide = 5-[(5-phospho-1-deoxy-D-ribulos-1-ylimino)methylamino]-1-(5-phospho-beta-D-ribosyl)imidazole-4-carboxamide. Its pathway is amino-acid biosynthesis; L-histidine biosynthesis; L-histidine from 5-phospho-alpha-D-ribose 1-diphosphate: step 4/9. The chain is 1-(5-phosphoribosyl)-5-[(5-phosphoribosylamino)methylideneamino] imidazole-4-carboxamide isomerase from Parabacteroides distasonis (strain ATCC 8503 / DSM 20701 / CIP 104284 / JCM 5825 / NCTC 11152).